A 311-amino-acid chain; its full sequence is Olfactory receptor 2M4 (311 aa).

Topologically, residues 1–25 (MVWENQTFNSIFILLGIFNHSPTHT) are extracellular. A glycan (N-linked (GlcNAc...) asparagine) is linked at asparagine 5. A helical transmembrane segment spans residues 26–49 (FLFSLVLGIFSLALMENISMVLLI). Over 50–57 (YIEKQLHT) the chain is Cytoplasmic. A helical transmembrane segment spans residues 58 to 79 (PMYFLLSQLSLMDLMLICTTLP). Over 80 to 100 (KMIFSYLSGKKSISLAGCGTQ) the chain is Extracellular. The cysteines at positions 97 and 189 are disulfide-linked. Residues 101 to 120 (IFFYVSLLGAECFLLAVMAY) form a helical membrane-spanning segment. The Cytoplasmic segment spans residues 121 to 139 (DRYVAICHPLQYTILMNPK). Residues 140–158 (LCVFMTVASWTLGSLDGII) traverse the membrane as a helical segment. The Extracellular portion of the chain corresponds to 159 to 195 (VLAAVLSFSYCSSLEIHHFFCDVAALLPLSCTETSAF). Residues 196–219 (ERLLVICCVVMLIFPVSVIILSYS) form a helical membrane-spanning segment. The Cytoplasmic portion of the chain corresponds to 220–236 (HVLRAVIHMGSGESRRK). Residues 237–259 (AFTTCSSHLSVVGLYYGAAMFMY) form a helical membrane-spanning segment. The Extracellular portion of the chain corresponds to 260–272 (MRPASKHTPDQDK). Residues 273-292 (MVSAFYTILTPMLNPLIYSL) form a helical membrane-spanning segment. Residues 293–311 (RNKEVFRALQKVLKKRKLI) lie on the Cytoplasmic side of the membrane.

The protein belongs to the G-protein coupled receptor 1 family.

The protein resides in the cell membrane. In terms of biological role, odorant receptor. The chain is Olfactory receptor 2M4 (OR2M4) from Homo sapiens (Human).